We begin with the raw amino-acid sequence, 507 residues long: Alkyl hydroperoxide reductase subunit F (507 aa).

207-222 (DVLIVGGGPASGSAAI) lines the FAD pocket. A disulfide bridge links Cys335 with Cys338. 347–361 (DVAVIGGGNSGVEAA) is a binding site for NAD(+). An FAD-binding site is contributed by 467-477 (TNVPGIFAAGD).

This sequence belongs to the class-II pyridine nucleotide-disulfide oxidoreductase family. In terms of assembly, homodimer. FAD serves as cofactor.

Functionally, serves to protect the cell against DNA damage by alkyl hydroperoxides. It can use either NADH or NADPH as electron donor for direct reduction of redox dyes or of alkyl hydroperoxides when combined with the AhpC protein. This is Alkyl hydroperoxide reductase subunit F (ahpF) from Staphylococcus aureus (strain MRSA252).